The primary structure comprises 521 residues: Bifunctional purine biosynthesis protein PurH (521 aa).

The region spanning 1 to 145 (MIKQALISVS…KNHRDVTVVV (145 aa)) is the MGS-like domain.

Belongs to the PurH family.

The enzyme catalyses (6R)-10-formyltetrahydrofolate + 5-amino-1-(5-phospho-beta-D-ribosyl)imidazole-4-carboxamide = 5-formamido-1-(5-phospho-D-ribosyl)imidazole-4-carboxamide + (6S)-5,6,7,8-tetrahydrofolate. The catalysed reaction is IMP + H2O = 5-formamido-1-(5-phospho-D-ribosyl)imidazole-4-carboxamide. It functions in the pathway purine metabolism; IMP biosynthesis via de novo pathway; 5-formamido-1-(5-phospho-D-ribosyl)imidazole-4-carboxamide from 5-amino-1-(5-phospho-D-ribosyl)imidazole-4-carboxamide (10-formyl THF route): step 1/1. It participates in purine metabolism; IMP biosynthesis via de novo pathway; IMP from 5-formamido-1-(5-phospho-D-ribosyl)imidazole-4-carboxamide: step 1/1. The polypeptide is Bifunctional purine biosynthesis protein PurH (Burkholderia orbicola (strain MC0-3)).